A 152-amino-acid chain; its full sequence is Deoxyuridine 5'-triphosphate nucleotidohydrolase (152 aa).

Substrate-binding positions include 71–73 (RSG), N84, 88–90 (LID), and M98.

Belongs to the dUTPase family. The cofactor is Mg(2+).

The enzyme catalyses dUTP + H2O = dUMP + diphosphate + H(+). The protein operates within pyrimidine metabolism; dUMP biosynthesis; dUMP from dCTP (dUTP route): step 2/2. Functionally, this enzyme is involved in nucleotide metabolism: it produces dUMP, the immediate precursor of thymidine nucleotides and it decreases the intracellular concentration of dUTP so that uracil cannot be incorporated into DNA. In Pectobacterium carotovorum subsp. carotovorum (strain PC1), this protein is Deoxyuridine 5'-triphosphate nucleotidohydrolase.